The chain runs to 786 residues: Polyribonucleotide nucleotidyltransferase (786 aa).

Residues D516 and D522 each contribute to the Mg(2+) site. The KH domain occupies P582–V641. The S1 motif domain maps to G653–V722. A disordered region spans residues V722 to S786. Over residues A727–R738 the composition is skewed to low complexity. Residues P739–R778 show a composition bias toward basic and acidic residues.

This sequence belongs to the polyribonucleotide nucleotidyltransferase family. Mg(2+) serves as cofactor.

It localises to the cytoplasm. The enzyme catalyses RNA(n+1) + phosphate = RNA(n) + a ribonucleoside 5'-diphosphate. Involved in mRNA degradation. Catalyzes the phosphorolysis of single-stranded polyribonucleotides processively in the 3'- to 5'-direction. The sequence is that of Polyribonucleotide nucleotidyltransferase from Salinispora arenicola (strain CNS-205).